We begin with the raw amino-acid sequence, 293 residues long: Elongation factor Ts (293 aa).

The involved in Mg(2+) ion dislocation from EF-Tu stretch occupies residues T80–V83.

It belongs to the EF-Ts family.

Its subcellular location is the cytoplasm. Its function is as follows. Associates with the EF-Tu.GDP complex and induces the exchange of GDP to GTP. It remains bound to the aminoacyl-tRNA.EF-Tu.GTP complex up to the GTP hydrolysis stage on the ribosome. The chain is Elongation factor Ts from Herminiimonas arsenicoxydans.